The sequence spans 341 residues: Anthranilate phosphoribosyltransferase (341 aa).

5-phospho-alpha-D-ribose 1-diphosphate contacts are provided by residues Gly80, 83–84, Thr88, 90–93, 108–116, and Ser120; these read GD, NIST, and KHGNRSVSS. Gly80 contributes to the anthranilate binding site. Ser92 provides a ligand contact to Mg(2+). Asn111 contacts anthranilate. Arg166 provides a ligand contact to anthranilate. Mg(2+) is bound by residues Asp225 and Glu226.

The protein belongs to the anthranilate phosphoribosyltransferase family. Homodimer. Mg(2+) is required as a cofactor.

The catalysed reaction is N-(5-phospho-beta-D-ribosyl)anthranilate + diphosphate = 5-phospho-alpha-D-ribose 1-diphosphate + anthranilate. It participates in amino-acid biosynthesis; L-tryptophan biosynthesis; L-tryptophan from chorismate: step 2/5. Functionally, catalyzes the transfer of the phosphoribosyl group of 5-phosphorylribose-1-pyrophosphate (PRPP) to anthranilate to yield N-(5'-phosphoribosyl)-anthranilate (PRA). In Shouchella clausii (strain KSM-K16) (Alkalihalobacillus clausii), this protein is Anthranilate phosphoribosyltransferase.